The following is a 175-amino-acid chain: Methylmalonyl-CoA epimerase, mitochondrial (175 aa).

A mitochondrion-targeting transit peptide spans 1-35 (MARVLKVAAASAAGLFPRLRTPVSTVRTSASLSSH). The VOC domain occupies 46-175 (RLNHVAVAVP…GGVLVELEQA (130 aa)). His49 is a binding site for Co(2+). Lys113 carries the N6-succinyllysine modification. His121 serves as a coordination point for Co(2+). Residue Lys149 is modified to N6-acetyllysine; alternate. Lys149 is subject to N6-succinyllysine; alternate. Position 171 (Glu171) interacts with Co(2+).

The protein belongs to the methylmalonyl-CoA epimerase family.

Its subcellular location is the mitochondrion. The enzyme catalyses (R)-methylmalonyl-CoA = (S)-methylmalonyl-CoA. Its function is as follows. Methylmalonyl-CoA epimerase involved in propionyl-CoA metabolism. The polypeptide is Methylmalonyl-CoA epimerase, mitochondrial (MCEE) (Bos taurus (Bovine)).